Consider the following 122-residue polypeptide: Small ribosomal subunit protein uS13 (122 aa).

The segment covering 97-114 (PVRGQRTHTNAKTRKGKS) has biased composition (basic residues). The disordered stretch occupies residues 97–122 (PVRGQRTHTNAKTRKGKSRLPIAGKE).

This sequence belongs to the universal ribosomal protein uS13 family. In terms of assembly, part of the 30S ribosomal subunit. Forms a loose heterodimer with protein S19. Forms two bridges to the 50S subunit in the 70S ribosome.

Located at the top of the head of the 30S subunit, it contacts several helices of the 16S rRNA. In the 70S ribosome it contacts the 23S rRNA (bridge B1a) and protein L5 of the 50S subunit (bridge B1b), connecting the 2 subunits; these bridges are implicated in subunit movement. Contacts the tRNAs in the A and P-sites. In Wolbachia sp. subsp. Brugia malayi (strain TRS), this protein is Small ribosomal subunit protein uS13.